A 445-amino-acid chain; its full sequence is 3-phosphoshikimate 1-carboxyvinyltransferase (445 aa).

K21, S22, and R26 together coordinate 3-phosphoshikimate. K21 is a binding site for phosphoenolpyruvate. Residues G92 and R120 each coordinate phosphoenolpyruvate. 3-phosphoshikimate is bound by residues S165, Q166, D307, and K334. Q166 provides a ligand contact to phosphoenolpyruvate. D307 serves as the catalytic Proton acceptor. Phosphoenolpyruvate is bound by residues R338, R379, and K405.

The protein belongs to the EPSP synthase family. As to quaternary structure, monomer.

The protein localises to the cytoplasm. It catalyses the reaction 3-phosphoshikimate + phosphoenolpyruvate = 5-O-(1-carboxyvinyl)-3-phosphoshikimate + phosphate. The protein operates within metabolic intermediate biosynthesis; chorismate biosynthesis; chorismate from D-erythrose 4-phosphate and phosphoenolpyruvate: step 6/7. Catalyzes the transfer of the enolpyruvyl moiety of phosphoenolpyruvate (PEP) to the 5-hydroxyl of shikimate-3-phosphate (S3P) to produce enolpyruvyl shikimate-3-phosphate and inorganic phosphate. This chain is 3-phosphoshikimate 1-carboxyvinyltransferase, found in Chlamydia abortus (strain DSM 27085 / S26/3) (Chlamydophila abortus).